A 357-amino-acid polypeptide reads, in one-letter code: D-alanine--D-alanine ligase (357 aa).

The 195-residue stretch at 145–339 folds into the ATP-grasp domain; it reads KEVMLYHGIQ…YGDLVMDIVN (195 aa). Residue 172–225 coordinates ATP; sequence PFDFPVVVKPTSGGSSVGTHIIHNQEELESGLEDVFRFDNSAIVEEFTPGREFS. Residues aspartate 294, glutamate 306, and asparagine 308 each coordinate Mg(2+).

Belongs to the D-alanine--D-alanine ligase family. Requires Mg(2+) as cofactor. Mn(2+) is required as a cofactor.

The protein localises to the cytoplasm. It catalyses the reaction 2 D-alanine + ATP = D-alanyl-D-alanine + ADP + phosphate + H(+). It functions in the pathway cell wall biogenesis; peptidoglycan biosynthesis. Its function is as follows. Cell wall formation. This Lacticaseibacillus paracasei (strain ATCC 334 / BCRC 17002 / CCUG 31169 / CIP 107868 / KCTC 3260 / NRRL B-441) (Lactobacillus paracasei) protein is D-alanine--D-alanine ligase.